The following is a 130-amino-acid chain: Holo-[acyl-carrier-protein] synthase (130 aa).

Residues Asp9 and Glu58 each coordinate Mg(2+).

The protein belongs to the P-Pant transferase superfamily. AcpS family. Mg(2+) is required as a cofactor.

It is found in the cytoplasm. The enzyme catalyses apo-[ACP] + CoA = holo-[ACP] + adenosine 3',5'-bisphosphate + H(+). Functionally, transfers the 4'-phosphopantetheine moiety from coenzyme A to a Ser of acyl-carrier-protein. The sequence is that of Holo-[acyl-carrier-protein] synthase from Mycobacterium bovis (strain ATCC BAA-935 / AF2122/97).